The primary structure comprises 368 residues: tRNA-specific 2-thiouridylase MnmA (368 aa).

Residues 11-18 (GMSGGVDS) and Met37 each bind ATP. Residues 97 to 99 (NPD) are interaction with target base in tRNA. The Nucleophile role is filled by Cys102. Cys102 and Cys199 are disulfide-bonded. Gly127 contacts ATP. Positions 149-151 (KDQ) are interaction with tRNA. Cys199 acts as the Cysteine persulfide intermediate in catalysis. The tract at residues 311–312 (RY) is interaction with tRNA.

Belongs to the MnmA/TRMU family. As to quaternary structure, interacts with TusE.

It is found in the cytoplasm. The catalysed reaction is S-sulfanyl-L-cysteinyl-[protein] + uridine(34) in tRNA + AH2 + ATP = 2-thiouridine(34) in tRNA + L-cysteinyl-[protein] + A + AMP + diphosphate + H(+). Functionally, catalyzes the 2-thiolation of uridine at the wobble position (U34) of tRNA(Lys), tRNA(Glu) and tRNA(Gln), leading to the formation of s(2)U34, the first step of tRNA-mnm(5)s(2)U34 synthesis. Sulfur is provided by IscS, via a sulfur-relay system. Binds ATP and its substrate tRNAs. The sequence is that of tRNA-specific 2-thiouridylase MnmA from Salmonella paratyphi B (strain ATCC BAA-1250 / SPB7).